The following is a 101-amino-acid chain: RNA-binding protein Hfq (101 aa).

A Sm domain is found at 9–68 (DPFLNALRRERVPVSIYLVNGIKLQGQVESFDQFVILLKNTVSQMVYKHAISTVVPSRPV). A disordered region spans residues 63–101 (VPSRPVSHHSNNPSGSTNNYHGSNPSAPQQPQQDSDDAE). The span at 70–86 (HHSNNPSGSTNNYHGSN) shows a compositional bias: polar residues.

The protein belongs to the Hfq family. In terms of assembly, homohexamer.

Functionally, RNA chaperone that binds small regulatory RNA (sRNAs) and mRNAs to facilitate mRNA translational regulation in response to envelope stress, environmental stress and changes in metabolite concentrations. Also binds with high specificity to tRNAs. Positively regulates the expression of the yst gene for heat-stable enterotoxin (Y-ST). This chain is RNA-binding protein Hfq, found in Yersinia enterocolitica.